A 491-amino-acid polypeptide reads, in one-letter code: Glycogen synthase (491 aa).

Lysine 15 is a binding site for ADP-alpha-D-glucose.

This sequence belongs to the glycosyltransferase 1 family. Bacterial/plant glycogen synthase subfamily.

The enzyme catalyses [(1-&gt;4)-alpha-D-glucosyl](n) + ADP-alpha-D-glucose = [(1-&gt;4)-alpha-D-glucosyl](n+1) + ADP + H(+). Its pathway is glycan biosynthesis; glycogen biosynthesis. In terms of biological role, synthesizes alpha-1,4-glucan chains using ADP-glucose. This chain is Glycogen synthase, found in Treponema denticola (strain ATCC 35405 / DSM 14222 / CIP 103919 / JCM 8153 / KCTC 15104).